A 46-amino-acid chain; its full sequence is Mu-segestritoxin-Sf1b (46 aa).

Disulfide bonds link cysteine 3/cysteine 19, cysteine 10/cysteine 22, cysteine 18/cysteine 42, and cysteine 24/cysteine 40. Residues 31–33 form a keys region for toxin activity region; that stretch reads RPW.

This sequence belongs to the neurotoxin 16 (SFI) family. Expressed by the venom gland.

The protein resides in the secreted. Functionally, insecticidal toxin. Causes flaccid paralysis followed by death when injected into Heliothis virescens larvae. Does not induce any toxic effects when injected intravenously into adult mice at a dose of 1.25 mg/kg body weight. In Segestria florentina (Tube-web spider), this protein is Mu-segestritoxin-Sf1b.